Reading from the N-terminus, the 853-residue chain is DNA mismatch repair protein MutS (853 aa).

An ATP-binding site is contributed by Gly-613–Ser-620.

The protein belongs to the DNA mismatch repair MutS family.

In terms of biological role, this protein is involved in the repair of mismatches in DNA. It is possible that it carries out the mismatch recognition step. This protein has a weak ATPase activity. The polypeptide is DNA mismatch repair protein MutS (Vibrio parahaemolyticus serotype O3:K6 (strain RIMD 2210633)).